The primary structure comprises 695 residues: MEMRLNAASIWLLILSYGATIAQGERTRDKMYEPIGGASCFRRLNGTHQTGCSSTYSGSVGVLHLINVEADLEFLLSSPPSPPYAPMIPPHLFTRNNLMRLKEAGPKNISVVLLINRTNQMKQFSHELNCPNQYSGLNSTSETCDASNPAKNWNPWGTGLLHEDFPFPIYYIADLDQVTKLEKCFQDFNNHNYETHALRSLCAVEVKSFMSAAVNTEVCMRRTNFINNLGGSKYCDPLEGRNVYATLYPRKPAIENNLETVHTNEKFILVTCRLDTTTMFDGVGLGAMDSLMGFAVFTHVAYLLKQLLPPQSKDLHNVLFVTFNGESYDYIGSQRFVYDMEKLQFPTESTGTPPIAFDNIDFMLDIGTLDDISNIKLHALNGTTLAQQILERLNNYAKSPRYGFNLNIQSEMSAHLPPTSAQSFLRRDPNFNALILNARPTNKYYHSIYDDADNVDFTYANTSKDFTQLTEVNDFKSLNPDSLQMKVRNVSSIVAMALYQTITGKEYTGTKVANPLMADEFLYCFLQSADCPLFKAASYPGSQLTNLPPMRYISVLGGSQESSGYTYRLLGYLLSQLQPDIHRDNCTDLPLHYFAGFNNIGECRLTTQNYSHALSPAFLIDGYDWSSGMYSTWTESTWSQFSARIFLRPSNVHQVTTLSVGIVVLIISFCLVYIISSRSEVLFEDLPASNAALFG.

The signal sequence occupies residues 1 to 22 (MEMRLNAASIWLLILSYGATIA). Over 23–654 (QGERTRDKMY…IFLRPSNVHQ (632 aa)) the chain is Extracellular. Residues Asn45, Asn108, Asn116, Asn138, Asn381, Asn461, Asn489, Asn585, and Asn609 are each glycosylated (N-linked (GlcNAc...) asparagine). A helical membrane pass occupies residues 655–675 (VTTLSVGIVVLIISFCLVYII). Over 676–695 (SSRSEVLFEDLPASNAALFG) the chain is Cytoplasmic.

Belongs to the nicastrin family. As to quaternary structure, component of the gamma-secretase complex, a complex composed of a presenilin (Psn) homodimer, nicastrin (Nct), Aph-1 and Pen-2.

The protein localises to the membrane. In terms of biological role, essential subunit of the gamma-secretase complex, an endoprotease complex that catalyzes the intramembrane cleavage of integral membrane proteins such as Notch. It probably represents a stabilizing cofactor required for the assembly of the gamma-secretase complex. In Drosophila melanogaster (Fruit fly), this protein is Nicastrin.